The primary structure comprises 418 residues: Inner capsid protein sigma-2 (418 aa).

This sequence belongs to the orthoreovirus sigma-1 protein family. In terms of assembly, interacts with protein mu-NS; in viral inclusions.

It is found in the virion. Its function is as follows. Inner capsid (core) component. This Reovirus type 3 (strain Dearing) (T3D) protein is Inner capsid protein sigma-2 (S2).